The sequence spans 373 residues: uncharacterized protein (373 aa).

This is an uncharacterized protein from Methanocaldococcus jannaschii (strain ATCC 43067 / DSM 2661 / JAL-1 / JCM 10045 / NBRC 100440) (Methanococcus jannaschii).